The sequence spans 480 residues: MMTEAERASKLAEPAANDTPTRGKGVFYVHTLGCQMNVHDSERIAGVLEADGYVPATEEQYLNHDIDLIVMNTCAVRENAAERMYGTIGLWAELKRERPNLQIAVGGCMAQLDREKIAKKAPWVDAVFGTKNIGSLPQLLDQARIEGHAQVKVQEELNYFPSQLPTDRASKVSSWVAISVGCNNTCTFCIVPTTRGKEHDRRPGDILAEIRQCVDEGAKEVTLLGQNVNSFGYGIGDRFAFSKLLRACGEIDGLERVRFTSPHPAAFTDDVIAAMAETPNVMHQLHFPLQSGSDRILRAMRRSYRSAKFLDILRKIREAMPDAQISTDIIVGFPGETEEDFQETLRVVEEARFASAFTFIYSPRPGTPAAEMEQVPHDVVQDRFERLVALQERITEENLKTFEGRDVEVMVTGASGKKDAATHRVTGREKTGVLVHVGVPEGEPMPQVGDFVTATVTHAGRHNLIADPNPEAGQTYAVRH.

Positions 25–145 (GVFYVHTLGC…LPQLLDQARI (121 aa)) constitute an MTTase N-terminal domain. Positions 34, 74, 108, 182, 186, and 189 each coordinate [4Fe-4S] cluster. One can recognise a Radical SAM core domain in the interval 168–397 (RASKVSSWVA…VALQERITEE (230 aa)). The region spanning 400–470 (KTFEGRDVEV…RHNLIADPNP (71 aa)) is the TRAM domain.

This sequence belongs to the methylthiotransferase family. MiaB subfamily. As to quaternary structure, monomer. Requires [4Fe-4S] cluster as cofactor.

It is found in the cytoplasm. It catalyses the reaction N(6)-dimethylallyladenosine(37) in tRNA + (sulfur carrier)-SH + AH2 + 2 S-adenosyl-L-methionine = 2-methylsulfanyl-N(6)-dimethylallyladenosine(37) in tRNA + (sulfur carrier)-H + 5'-deoxyadenosine + L-methionine + A + S-adenosyl-L-homocysteine + 2 H(+). Functionally, catalyzes the methylthiolation of N6-(dimethylallyl)adenosine (i(6)A), leading to the formation of 2-methylthio-N6-(dimethylallyl)adenosine (ms(2)i(6)A) at position 37 in tRNAs that read codons beginning with uridine. The sequence is that of tRNA-2-methylthio-N(6)-dimethylallyladenosine synthase from Bifidobacterium adolescentis (strain ATCC 15703 / DSM 20083 / NCTC 11814 / E194a).